The sequence spans 153 residues: MTAKFTVLVLNGPNLNMLGKREPTIYGNQGLSEIIADLGLQADQKNIVLKHLQSNAEHELVDAIHNGYQQVDFIIINPAAFTHTSVAIRDALLSVAIPFIEVHLSNVHAREAFRKHSYLSDIATGVICGFGAQGYSFALDAAYTYLNKAQVDK.

The active-site Proton acceptor is the tyrosine 26. Residues asparagine 77, histidine 83, and aspartate 90 each contribute to the substrate site. The active-site Proton donor is histidine 103. Substrate-binding positions include 104 to 105 (LS) and arginine 114.

It belongs to the type-II 3-dehydroquinase family. As to quaternary structure, homododecamer.

The catalysed reaction is 3-dehydroquinate = 3-dehydroshikimate + H2O. The protein operates within metabolic intermediate biosynthesis; chorismate biosynthesis; chorismate from D-erythrose 4-phosphate and phosphoenolpyruvate: step 3/7. Functionally, catalyzes a trans-dehydration via an enolate intermediate. The polypeptide is 3-dehydroquinate dehydratase (Colwellia psychrerythraea (strain 34H / ATCC BAA-681) (Vibrio psychroerythus)).